Reading from the N-terminus, the 264-residue chain is Small ribosomal subunit protein eS1 (264 aa).

The tract at residues 232–264 (HGEGGGSGKPSGDETGAKVERADGYEPPVQESV) is disordered. Over residues 242 to 255 (SGDETGAKVERADG) the composition is skewed to basic and acidic residues.

Belongs to the eukaryotic ribosomal protein eS1 family. As to quaternary structure, component of the small ribosomal subunit. Mature ribosomes consist of a small (40S) and a large (60S) subunit. The 40S subunit contains about 33 different proteins and 1 molecule of RNA (18S). The 60S subunit contains about 49 different proteins and 3 molecules of RNA (28S, 5.8S and 5S). Part of the small subunit (SSU) processome, composed of more than 70 proteins and the RNA chaperone small nucleolar RNA (snoRNA) U3.

The protein resides in the cytoplasm. The protein localises to the nucleus. Its subcellular location is the nucleolus. Component of the small ribosomal subunit. The ribosome is a large ribonucleoprotein complex responsible for the synthesis of proteins in the cell. Part of the small subunit (SSU) processome, first precursor of the small eukaryotic ribosomal subunit. During the assembly of the SSU processome in the nucleolus, many ribosome biogenesis factors, an RNA chaperone and ribosomal proteins associate with the nascent pre-rRNA and work in concert to generate RNA folding, modifications, rearrangements and cleavage as well as targeted degradation of pre-ribosomal RNA by the RNA exosome. May play a role during erythropoiesis. This Ophiophagus hannah (King cobra) protein is Small ribosomal subunit protein eS1.